Reading from the N-terminus, the 438-residue chain is MNMFVDQIKIEVHAGKGGDGMVAFRREKYVPNGGPAGGDGGRGGSIILKVDEGLRTLMDFRYHRIFKAKNGGNGMSKQMTGPSAEDTIIAVPQGTTVRDLDTGKIIGDLVEKDQELVVAKGGRGGRGNIHFASAKNPAPEIAENGEPGEDHYLELELKMLADVGLIGFPSVGKSTLLSVVTGAKPKIAAYEFTTLTPNLGMVMLPDGRDFAMADMPGLIEGASKGIGLGLKFLRHIERTRVLLHLVDMSSEDPHQAIERYRQINKELADYDPELLKRPQIVVATKMDLPNSADNLAAFKADLAADKTLEKQPEIFPISAVTHQGVQQLMQLTADLLDKTPAFDSESHDKELVAEYRAAAPDKKDEADFTITKDEDGTWVLGGEKLIRLFKMTDLTHEESQLRFARQLRHMGVDDALRAKGVQDGDLVRIEKFVFEFIQ.

Residues 2–160 (NMFVDQIKIE…HYLELELKML (159 aa)) form the Obg domain. The OBG-type G domain maps to 161–337 (ADVGLIGFPS…LMQLTADLLD (177 aa)). Residues 167 to 174 (GFPSVGKS), 192 to 196 (FTTLT), 214 to 217 (DMPG), 284 to 287 (TKMD), and 318 to 320 (SAV) contribute to the GTP site. Residues Ser174 and Thr194 each coordinate Mg(2+). The OCT domain occupies 360–438 (PDKKDEADFT…IEKFVFEFIQ (79 aa)).

Belongs to the TRAFAC class OBG-HflX-like GTPase superfamily. OBG GTPase family. Monomer. Mg(2+) is required as a cofactor.

It localises to the cytoplasm. Functionally, an essential GTPase which binds GTP, GDP and possibly (p)ppGpp with moderate affinity, with high nucleotide exchange rates and a fairly low GTP hydrolysis rate. Plays a role in control of the cell cycle, stress response, ribosome biogenesis and in those bacteria that undergo differentiation, in morphogenesis control. This chain is GTPase Obg, found in Limosilactobacillus reuteri (strain DSM 20016) (Lactobacillus reuteri).